Consider the following 278-residue polypeptide: MEGHKSGMEAVAVAIPPLHTGESNHRIDSNVSSQCHADPAELSDETQQQSLWHLGLRKIIPSSVPLLKKVSAEFFGTFILIFTVLSTIIMDEQHKSIETLLGIATSAGLAVTVLVLSLIHISGCHLNPAISIAMAVFGHLPSAHLLPYISSQILGAVAASFAVKGLYHPVNPGIVTVPNVGTVEAFFVEFIITFFLLFIITALATDPNAVKELIAVAVGATVMMNILVAGPSTGASMNPARTIGAAIATGRYTQIWVYLVATPLGAIAGTGAYVAIKL.

2 consecutive transmembrane segments (helical) span residues 70-90 (VSAEFFGTFILIFTVLSTIIM) and 99-119 (TLLGIATSAGLAVTVLVLSLI). The NPA 1 motif lies at 127 to 129 (NPA). The next 3 membrane-spanning stretches (helical) occupy residues 141–163 (PSAHLLPYISSQILGAVAASFAV), 185–205 (AFFVEFIITFFLLFIITALAT), and 213–233 (LIAVAVGATVMMNILVAGPST). Residues 238-240 (NPA) carry the NPA 2 motif. Residues 255 to 275 (IWVYLVATPLGAIAGTGAYVA) traverse the membrane as a helical segment.

The protein belongs to the MIP/aquaporin (TC 1.A.8) family. NIP (TC 1.A.8.12) subfamily. Expressed in leaves and at lower levels in roots and anthers.

It localises to the membrane. In terms of biological role, aquaporins facilitate the transport of water and small neutral solutes across cell membranes. This Oryza sativa subsp. japonica (Rice) protein is Aquaporin NIP3-3 (NIP3-3).